Consider the following 131-residue polypeptide: Lymphocyte antigen 6C2 (131 aa).

The N-terminal stretch at 1–26 (MDSTHATKSCLLILLVALLCAGRAQG) is a signal peptide. One can recognise a UPAR/Ly6 domain in the interval 27 to 116 (LQCYECYGVP…TAGSTWTMAG (90 aa)). 5 disulfide bridges follow: cysteine 29–cysteine 53, cysteine 32–cysteine 41, cysteine 46–cysteine 74, cysteine 78–cysteine 95, and cysteine 96–cysteine 101. Glycine 109 carries the GPI-anchor amidated glycine lipid modification. The propeptide at 110 to 131 (STWTMAGVLLFSLSSVILQTLL) is removed in mature form.

The protein resides in the cell membrane. The polypeptide is Lymphocyte antigen 6C2 (Ly6c2) (Mus musculus (Mouse)).